A 700-amino-acid polypeptide reads, in one-letter code: Calpain-2 catalytic subunit (700 aa).

A2 is modified (N-acetylalanine). A propeptide spans 2–19 (anchors to the small subunit); it reads AGIAAKLAKDREAAEGLG. The Calpain catalytic domain occupies 45-344; sequence LFQDPSFPAL…YSRLEICNLT (300 aa). Ca(2+) is bound by residues G91 and D96. C105 is an active-site residue. The Ca(2+) site is built by E175, Q229, and K230. Catalysis depends on residues H262 and N286. Ca(2+)-binding residues include E292, D299, and E323. Residues 345–514 are domain III; the sequence is PDTLTSDSYK…KKADYQVVDD (170 aa). The tract at residues 515 to 529 is linker; the sequence is EIEANIDEIDISEDD. The tract at residues 530–700 is domain IV; sequence IDDGFRRLFA…LISWLSFSVL (171 aa). Ca(2+) is bound by residues A542, D545, E547, E552, D585, D587, S589, K591, E596, D615, D617, S619, T621, E626, D658, and N661. EF-hand domains are found at residues 572–597, 602–637, and 652–672; these read FSIE…LKEF, TKIQ…AGFK, and DDDL…LETL.

It belongs to the peptidase C2 family. Forms a heterodimer with a small (regulatory) subunit (CAPNS1). Interacts with CPEB3; this leads to cleavage of CPEB3. Requires Ca(2+) as cofactor. In terms of tissue distribution, ubiquitous.

Its subcellular location is the cytoplasm. It is found in the cell membrane. It catalyses the reaction Broad endopeptidase specificity.. Activated by 200-1000 micromolar concentrations of calcium and inhibited by calpastatin. Functionally, calcium-regulated non-lysosomal thiol-protease which catalyzes limited proteolysis of substrates involved in cytoskeletal remodeling and signal transduction. Proteolytically cleaves MYOC at 'Arg-226'. Proteolytically cleaves CPEB3 following neuronal stimulation which abolishes CPEB3 translational repressor activity, leading to translation of CPEB3 target mRNAs. The protein is Calpain-2 catalytic subunit (CAPN2) of Bos taurus (Bovine).